The chain runs to 154 residues: Myoglobin (154 aa).

Positions 2-148 (GLSDGEWQLV…FRNDMAAKYK (147 aa)) constitute a Globin domain. Ser4 bears the Phosphoserine mark. His65 serves as a coordination point for nitrite. His65 is a binding site for O2. Thr68 is subject to Phosphothreonine. Residue His94 coordinates heme b.

The protein belongs to the globin family. As to quaternary structure, monomeric.

The protein resides in the cytoplasm. It localises to the sarcoplasm. It catalyses the reaction Fe(III)-heme b-[protein] + nitric oxide + H2O = Fe(II)-heme b-[protein] + nitrite + 2 H(+). The catalysed reaction is H2O2 + AH2 = A + 2 H2O. Functionally, monomeric heme protein which primary function is to store oxygen and facilitate its diffusion within muscle tissues. Reversibly binds oxygen through a pentacoordinated heme iron and enables its timely and efficient release as needed during periods of heightened demand. Depending on the oxidative conditions of tissues and cells, and in addition to its ability to bind oxygen, it also has a nitrite reductase activity whereby it regulates the production of bioactive nitric oxide. Under stress conditions, like hypoxia and anoxia, it also protects cells against reactive oxygen species thanks to its pseudoperoxidase activity. This is Myoglobin (MB) from Lagothrix lagotricha (Brown woolly monkey).